Reading from the N-terminus, the 196-residue chain is DNA replication complex GINS protein PSF1 (196 aa).

Belongs to the GINS1/PSF1 family. Component of the GINS complex which is a heterotetramer of GINS1, GINS2, GINS3 and GINS4. Forms a stable subcomplex with GINS4. GINS complex interacts with DNA primase in vitro. Component of the CMG helicase complex, a hexameric ring of related MCM2-7 subunits stabilized by CDC45 and the tetrameric GINS complex.

It is found in the nucleus. Its subcellular location is the chromosome. Required for correct functioning of the GINS complex, a complex that plays an essential role in the initiation of DNA replication, and progression of DNA replication forks. GINS complex is a core component of CDC45-MCM-GINS (CMG) helicase, the molecular machine that unwinds template DNA during replication, and around which the replisome is built. The protein is DNA replication complex GINS protein PSF1 (GINS1) of Bos taurus (Bovine).